A 337-amino-acid polypeptide reads, in one-letter code: Receptor like protein kinase S.3 (337 aa).

The region spanning 50–316 (FKESELFGTE…VNYLEGNDVL (267 aa)) is the Protein kinase domain. ATP contacts are provided by residues 56–64 (FGTEANGTV) and lysine 78. Tyrosine 123 carries the phosphotyrosine modification. Aspartate 171 functions as the Proton acceptor in the catalytic mechanism.

Belongs to the protein kinase superfamily. Ser/Thr protein kinase family.

The enzyme catalyses L-seryl-[protein] + ATP = O-phospho-L-seryl-[protein] + ADP + H(+). The catalysed reaction is L-threonyl-[protein] + ATP = O-phospho-L-threonyl-[protein] + ADP + H(+). The chain is Receptor like protein kinase S.3 (LECRKS3) from Arabidopsis thaliana (Mouse-ear cress).